The primary structure comprises 184 residues: Peptide deformylase 2 (184 aa).

The Fe cation site is built by Cys110 and His153. Glu154 is a catalytic residue. His157 serves as a coordination point for Fe cation.

The protein belongs to the polypeptide deformylase family. The cofactor is Fe(2+).

The catalysed reaction is N-terminal N-formyl-L-methionyl-[peptide] + H2O = N-terminal L-methionyl-[peptide] + formate. Its function is as follows. Removes the formyl group from the N-terminal Met of newly synthesized proteins. Requires at least a dipeptide for an efficient rate of reaction. N-terminal L-methionine is a prerequisite for activity but the enzyme has broad specificity at other positions. This is Peptide deformylase 2 (defB) from Bacillus subtilis (strain 168).